The sequence spans 267 residues: DNA damage-regulated autophagy modulator protein 2 (267 aa).

The next 6 membrane-spanning stretches (helical) occupy residues 8–28 (LSFL…FSYI), 53–73 (RCLF…TMYV), 87–107 (LIIK…LGLS), 118–138 (FIVH…YMFV), 160–180 (LLLV…SSIL), and 203–223 (VLHL…FGFF).

It belongs to the DRAM/TMEM150 family. As to expression, expressed in the retina.

Its subcellular location is the lysosome membrane. The protein localises to the photoreceptor inner segment. It localises to the apical cell membrane. Functionally, plays a role in the initiation of autophagy. In the retina, might be involved in the process of photoreceptor cells renewal and recycling to preserve visual function. Induces apoptotic cell death when coexpressed with DRAM1. The protein is DNA damage-regulated autophagy modulator protein 2 (Dram2) of Mus musculus (Mouse).